Consider the following 267-residue polypeptide: DNA damage-regulated autophagy modulator protein 2 (267 aa).

6 helical membrane passes run 8–28 (LSFL…FSYI), 53–73 (RCLF…TMYV), 87–107 (LIIK…LGLS), 118–138 (FIVH…YMFV), 160–180 (LLLV…SSIL), and 203–223 (VLHL…FGFF).

This sequence belongs to the DRAM/TMEM150 family. In terms of tissue distribution, expressed in the retina.

It localises to the lysosome membrane. The protein resides in the photoreceptor inner segment. It is found in the apical cell membrane. Plays a role in the initiation of autophagy. In the retina, might be involved in the process of photoreceptor cells renewal and recycling to preserve visual function. Induces apoptotic cell death when coexpressed with DRAM1. The polypeptide is DNA damage-regulated autophagy modulator protein 2 (Dram2) (Mus musculus (Mouse)).